We begin with the raw amino-acid sequence, 109 residues long: uncharacterized protein (109 aa).

The protein resides in the mitochondrion. This is an uncharacterized protein from Marchantia polymorpha (Common liverwort).